The sequence spans 115 residues: Holo-[acyl-carrier-protein] synthase (115 aa).

Residues aspartate 8 and glutamate 50 each contribute to the Mg(2+) site.

This sequence belongs to the P-Pant transferase superfamily. AcpS family. Requires Mg(2+) as cofactor.

It is found in the cytoplasm. It catalyses the reaction apo-[ACP] + CoA = holo-[ACP] + adenosine 3',5'-bisphosphate + H(+). Transfers the 4'-phosphopantetheine moiety from coenzyme A to a Ser of acyl-carrier-protein. The polypeptide is Holo-[acyl-carrier-protein] synthase (Cutibacterium acnes (strain DSM 16379 / KPA171202) (Propionibacterium acnes)).